The sequence spans 135 residues: Large ribosomal subunit protein uL16c (135 aa).

This sequence belongs to the universal ribosomal protein uL16 family. Part of the 50S ribosomal subunit.

The protein localises to the plastid. It localises to the chloroplast. The chain is Large ribosomal subunit protein uL16c from Populus alba (White poplar).